The chain runs to 152 residues: Ribonuclease HI (152 aa).

In terms of domain architecture, RNase H type-1 spans 1–142 (MDSKVVIYTD…ADKLAVQGRE (142 aa)). D10, E48, D70, and D134 together coordinate Mg(2+).

The protein belongs to the RNase H family. Monomer. Mg(2+) serves as cofactor.

Its subcellular location is the cytoplasm. It catalyses the reaction Endonucleolytic cleavage to 5'-phosphomonoester.. Functionally, endonuclease that specifically degrades the RNA of RNA-DNA hybrids. In Rickettsia prowazekii (strain Madrid E), this protein is Ribonuclease HI (rnhA).